A 511-amino-acid polypeptide reads, in one-letter code: Dihydrolipoyl dehydrogenase, mitochondrial (511 aa).

FAD-binding positions include 75 to 84 (EKRGTLGGTC), lysine 93, glycine 157, and 187 to 189 (TGS). Cysteines 84 and 89 form a disulfide. NAD(+) is bound by residues 224–231 (GGGIIGLE), glutamate 247, leucine 281, and glycine 316. FAD contacts are provided by residues aspartate 357 and 363–366 (MLAH). The active-site Proton acceptor is the histidine 489.

It belongs to the class-I pyridine nucleotide-disulfide oxidoreductase family. In terms of assembly, homodimer. It depends on FAD as a cofactor.

It is found in the mitochondrion matrix. The enzyme catalyses N(6)-[(R)-dihydrolipoyl]-L-lysyl-[protein] + NAD(+) = N(6)-[(R)-lipoyl]-L-lysyl-[protein] + NADH + H(+). Lipoamide dehydrogenase is a component of the alpha-ketoacid dehydrogenase complexes. Malfunction of this protein blocks the progression of cell cycle from G1 to S phase. This Schizosaccharomyces pombe (strain 972 / ATCC 24843) (Fission yeast) protein is Dihydrolipoyl dehydrogenase, mitochondrial (dld1).